An 84-amino-acid polypeptide reads, in one-letter code: ATP synthase subunit c (84 aa).

Helical transmembrane passes span 10-30 and 53-73; these read IAVA…FAIL and FIVA…ALFF.

This sequence belongs to the ATPase C chain family. As to quaternary structure, F-type ATPases have 2 components, F(1) - the catalytic core - and F(0) - the membrane proton channel. F(1) has five subunits: alpha(3), beta(3), gamma(1), delta(1), epsilon(1). F(0) has three main subunits: a(1), b(2) and c(10-14). The alpha and beta chains form an alternating ring which encloses part of the gamma chain. F(1) is attached to F(0) by a central stalk formed by the gamma and epsilon chains, while a peripheral stalk is formed by the delta and b chains.

It is found in the cell inner membrane. Its function is as follows. F(1)F(0) ATP synthase produces ATP from ADP in the presence of a proton or sodium gradient. F-type ATPases consist of two structural domains, F(1) containing the extramembraneous catalytic core and F(0) containing the membrane proton channel, linked together by a central stalk and a peripheral stalk. During catalysis, ATP synthesis in the catalytic domain of F(1) is coupled via a rotary mechanism of the central stalk subunits to proton translocation. Functionally, key component of the F(0) channel; it plays a direct role in translocation across the membrane. A homomeric c-ring of between 10-14 subunits forms the central stalk rotor element with the F(1) delta and epsilon subunits. In Shewanella putrefaciens (strain CN-32 / ATCC BAA-453), this protein is ATP synthase subunit c.